Consider the following 81-residue polypeptide: Large ribosomal subunit protein bL31B (81 aa).

Belongs to the bacterial ribosomal protein bL31 family. Type B subfamily. In terms of assembly, part of the 50S ribosomal subunit.

The chain is Large ribosomal subunit protein bL31B from Borreliella burgdorferi (strain ATCC 35210 / DSM 4680 / CIP 102532 / B31) (Borrelia burgdorferi).